Here is a 259-residue protein sequence, read N- to C-terminus: 5'-nucleotidase SurE (259 aa).

Residues D8, D9, S39, and N96 each coordinate a divalent metal cation.

It belongs to the SurE nucleotidase family. The cofactor is a divalent metal cation.

Its subcellular location is the cytoplasm. It carries out the reaction a ribonucleoside 5'-phosphate + H2O = a ribonucleoside + phosphate. Nucleotidase that shows phosphatase activity on nucleoside 5'-monophosphates. This chain is 5'-nucleotidase SurE, found in Pelotomaculum thermopropionicum (strain DSM 13744 / JCM 10971 / SI).